A 292-amino-acid polypeptide reads, in one-letter code: MPELPEVEVTRRGLLPHVVGRRIAAVTVRHRGLRWPVDPQLEMRLAQRVVRRIERRGKYLLLECVSEAAGEPAGWLLVHLGMTGTLRVLPEAPSPGAHDHLDLVLAPGPGAALGTKPGTIVLRFRDPRRFGAILWSTLPEAELPSHPLLRTLGIEPFDPAFDGAWLHRHTRGRSAAIKTVLLAGGIVVGVGNIYASESLFRAGIRPTTPAGRLSRARCDRLAQAVRETLAQAIERGGSTLRDFVGSDGASGYFQLDCLVYDRAGQPCRVCATPVRQIVQGQRSTFYCPNCQH.

The active-site Schiff-base intermediate with DNA is the P2. The active-site Proton donor is the E3. Catalysis depends on K58, which acts as the Proton donor; for beta-elimination activity. Residues H98, R128, and R173 each coordinate DNA. An FPG-type zinc finger spans residues L258–H292. R282 functions as the Proton donor; for delta-elimination activity in the catalytic mechanism.

Belongs to the FPG family. In terms of assembly, monomer. Requires Zn(2+) as cofactor.

The enzyme catalyses Hydrolysis of DNA containing ring-opened 7-methylguanine residues, releasing 2,6-diamino-4-hydroxy-5-(N-methyl)formamidopyrimidine.. It catalyses the reaction 2'-deoxyribonucleotide-(2'-deoxyribose 5'-phosphate)-2'-deoxyribonucleotide-DNA = a 3'-end 2'-deoxyribonucleotide-(2,3-dehydro-2,3-deoxyribose 5'-phosphate)-DNA + a 5'-end 5'-phospho-2'-deoxyribonucleoside-DNA + H(+). Its function is as follows. Involved in base excision repair of DNA damaged by oxidation or by mutagenic agents. Acts as a DNA glycosylase that recognizes and removes damaged bases. Has a preference for oxidized purines, such as 7,8-dihydro-8-oxoguanine (8-oxoG). Has AP (apurinic/apyrimidinic) lyase activity and introduces nicks in the DNA strand. Cleaves the DNA backbone by beta-delta elimination to generate a single-strand break at the site of the removed base with both 3'- and 5'-phosphates. The chain is Formamidopyrimidine-DNA glycosylase from Cupriavidus necator (strain ATCC 17699 / DSM 428 / KCTC 22496 / NCIMB 10442 / H16 / Stanier 337) (Ralstonia eutropha).